Reading from the N-terminus, the 209-residue chain is Ephrin-A2 (209 aa).

The N-terminal stretch at 1–20 (MAPAQRPLLPLLLLLLPLRA) is a signal peptide. An Ephrin RBD domain is found at 30–170 (ADRYAVYWNR…RLKVYVRPTN (141 aa)). An N-linked (GlcNAc...) asparagine glycan is attached at Asn-38. 2 disulfides stabilise this stretch: Cys-69–Cys-110 and Cys-98–Cys-159. N-linked (GlcNAc...) asparagine glycans are attached at residues Asn-170 and Asn-184. Asn-184 is lipidated: GPI-anchor amidated asparagine. A propeptide spans 185 to 209 (SSCSGLGGCHLFLTTVPVLWSLLGS) (removed in mature form).

The protein belongs to the ephrin family. In terms of assembly, binds to the receptor tyrosine kinases EPHA3, EPHA4 and EPHA5. Interacts with EPHA8; activates EPHA8. In terms of tissue distribution, expressed in myogenic progenitor cells.

The protein localises to the cell membrane. In terms of biological role, cell surface GPI-bound ligand for Eph receptors, a family of receptor tyrosine kinases which are crucial for migration, repulsion and adhesion during neuronal, vascular and epithelial development. Binds promiscuously Eph receptors residing on adjacent cells, leading to contact-dependent bidirectional signaling into neighboring cells. The signaling pathway downstream of the receptor is referred to as forward signaling while the signaling pathway downstream of the ephrin ligand is referred to as reverse signaling. With the EPHA2 receptor may play a role in bone remodeling through regulation of osteoclastogenesis and osteoblastogenesis. The protein is Ephrin-A2 (Efna2) of Mus musculus (Mouse).